Reading from the N-terminus, the 163-residue chain is Calcium-binding protein I (163 aa).

EF-hand domains lie at 20–42 (DKNKDRQYSIDEIVQLLKKNSKN), 82–117 (KPEIDIESFLLRFDKNNDKMISHHELKTKLDELGCG), and 118–153 (NSKKTTDYVFEQIDTNKEGSLSYEDLEGFVKFLKQD). Residues Asp-95, Asn-97, Asp-99, Met-101, Glu-106, Asp-131, Asn-133, Glu-135, Ser-137, and Asp-142 each coordinate Ca(2+).

The polypeptide is Calcium-binding protein I (cbpI) (Dictyostelium discoideum (Social amoeba)).